Here is a 506-residue protein sequence, read N- to C-terminus: Pyruvate kinase 2 (506 aa).

At serine 24 the chain carries Phosphoserine. Arginine 51 serves as a coordination point for substrate. K(+)-binding residues include asparagine 53, serine 55, aspartate 86, and threonine 87. ATP is bound at residue 53–56 (NFSH). Residues arginine 93 and lysine 179 each contribute to the ATP site. Residue glutamate 244 participates in Mg(2+) binding. The substrate site is built by glycine 267, aspartate 268, and threonine 300. Aspartate 268 contributes to the Mg(2+) binding site.

Belongs to the pyruvate kinase family. Homotetramer. It depends on Mg(2+) as a cofactor. K(+) serves as cofactor.

The catalysed reaction is pyruvate + ATP = phosphoenolpyruvate + ADP + H(+). Its pathway is carbohydrate degradation; glycolysis; pyruvate from D-glyceraldehyde 3-phosphate: step 5/5. Its activity is regulated as follows. Not activated by fructose-1,6-bisphosphate. Functionally, may be used by cells under conditions in which the level of glycolytic flux is very low. This chain is Pyruvate kinase 2 (PYK2), found in Saccharomyces cerevisiae (strain ATCC 204508 / S288c) (Baker's yeast).